The chain runs to 92 residues: Large ribosomal subunit protein bL27 (92 aa).

Positions 1 to 9 are excised as a propeptide; that stretch reads MLKLNLQFF. Positions 14–34 are disordered; the sequence is GVGSTKNGRDSQSKRLGAKRA.

Belongs to the bacterial ribosomal protein bL27 family. Post-translationally, the N-terminus is cleaved by ribosomal processing cysteine protease Prp.

The polypeptide is Large ribosomal subunit protein bL27 (Exiguobacterium sibiricum (strain DSM 17290 / CCUG 55495 / CIP 109462 / JCM 13490 / 255-15)).